An 84-amino-acid chain; its full sequence is U8-theraphotoxin-Hhn1e (84 aa).

The first 21 residues, 1–21 (MKVVLLVCLVWMMAMMELVSC), serve as a signal peptide directing secretion. 5 disulfides stabilise this stretch: cysteine 23/cysteine 35, cysteine 29/cysteine 44, cysteine 34/cysteine 67, cysteine 54/cysteine 75, and cysteine 69/cysteine 81.

This sequence belongs to the AVIT (prokineticin) family. Expressed by the venom gland.

Its subcellular location is the secreted. The protein is U8-theraphotoxin-Hhn1e of Cyriopagopus hainanus (Chinese bird spider).